Reading from the N-terminus, the 380-residue chain is MASLRKTHPILKIANSALVDLPAPSNISVWWNFGSLLGLCLITQLLTGLFLAMHYTSDIETAFSSVVHICRDVNYGWLIRNMHANGASFFFICLYMHIARGLYYGSYLFVETWNIGVVLFLLVMMTSFVGYVLPWGQMSFWGATVITNLMSTVPYVGDALVQWIWGGFSVDNATLTRFFAFHFLFPFVVAAFTMLHLLFLHETGSNNPTGINSNADKIPFHPYFTYKDLLGFAVMLLGLTALALFAPNLLGDPDNFTPANPIVTPPHVKPEWYFLFAYAILRSIPNKLGGVLALLFSILVLMVVPFLHTSKQRGLTFRPLTQMLFWVLVADMLVLTWIGGVPVEHPFIIIGQVASVLYFSLFLVLFPLAGMTENKALEWN.

The next 4 helical transmembrane spans lie at 33 to 53 (FGSL…FLAM), 77 to 98 (WLIR…YMHI), 113 to 133 (WNIG…GYVL), and 178 to 198 (FFAF…LHLL). Residues H83 and H97 each coordinate heme b. The heme b site is built by H182 and H196. H201 serves as a coordination point for a ubiquinone. 4 helical membrane-spanning segments follow: residues 226 to 246 (YKDL…ALFA), 288 to 308 (LGGV…PFLH), 320 to 340 (LTQM…WIGG), and 347 to 367 (FIII…VLFP).

The protein belongs to the cytochrome b family. In terms of assembly, the cytochrome bc1 complex contains 3 respiratory subunits (MT-CYB, CYC1 and UQCRFS1), 2 core proteins (UQCRC1 and UQCRC2) and probably 6 low-molecular weight proteins. It depends on heme b as a cofactor.

The protein resides in the mitochondrion inner membrane. Its function is as follows. Component of the ubiquinol-cytochrome c reductase complex (complex III or cytochrome b-c1 complex) that is part of the mitochondrial respiratory chain. The b-c1 complex mediates electron transfer from ubiquinol to cytochrome c. Contributes to the generation of a proton gradient across the mitochondrial membrane that is then used for ATP synthesis. The chain is Cytochrome b (mt-cyb) from Gadus morhua (Atlantic cod).